Reading from the N-terminus, the 103-residue chain is Acyl carrier protein homolog (103 aa).

The 85-residue stretch at 3–87 folds into the Carrier domain; sequence ELTSEIKKEI…ETLEKVVQTT (85 aa). S45 bears the O-(pantetheine 4'-phosphoryl)serine mark.

Post-translationally, 4'-phosphopantetheine is transferred from CoA to a specific serine of the apo-ACP-like protein.

Its subcellular location is the cytoplasm. Acyl carrier protein. The polypeptide is Acyl carrier protein homolog (Clostridium acetobutylicum (strain ATCC 824 / DSM 792 / JCM 1419 / IAM 19013 / LMG 5710 / NBRC 13948 / NRRL B-527 / VKM B-1787 / 2291 / W)).